The chain runs to 1055 residues: MASLEEPLAPRPQGPLPAAGDEPGCGPGKLRPEPRLSAAGGGSAAGPGPAPEWPGRGRAERAAPPRPPLSSAGRPSPAGGPGALSARGGGCGWVAARAPLALAFSSRVPSSSPSFFYFWPPPPPPPPSFLPSSSAFHLPVRLPGREGAAAAAAAGGGGDAGGGGGGGQEAAPLSVPTSSSHRGGGGSGGGRRRLFLSPALQGLLLPARAGPRPPPPPRLPLGQAARRAGSPGFPGAGPGGGGQTPRRPQGASFALAAAAALLFGSDMEDGPSNNASCFRRLTECFLSPSLTDEKVKAYLSLHPQVLDEFVSESVSAETVEKWLKRKNNKSEDESAPKEVSRYQDTNMQGVVYELNSYIEQRLDTGGDNQLLLYELSSIIKIATKADGFALYFLGECNNSLCIFTPPGIKEGKPRLIPAGPITQGTTVSAYVAKSRKTLLVEDILGDERFPRGTGLESGTRIQSVLCLPIVTAIGDLIGILELYRHWGKEAFCLSHQEVATANLAWASVAIHQVQVCRGLAKQTELNDFLLDVSKTYFDNIVAIDSLLEHIMIYAKNLVNADRCALFQVDHKNKELYSDLFDIGEEKEGKPVFKKTKEIRFSIEKGIAGQVARTGEVLNIPDAYADPRFNREVDLYTGYTTRNILCMPIVSRGSVIGVVQMVNKISGSAFSKTDENNFKMFAVFCALALHCANMYHRIRHSECIYRVTMEKLSYHSICTSEEWQGLMQFTLPVRLCKEIELFHFDIGPFENMWPGIFVYMVHRSCGTSCFELEKLCRFIMSVKKNYRRVPYHNWKHAVTVAHCMYAILQNNHTLFTDLERKGLLIACLCHDLDHRGFSNSYLQKFDHPLAALYSTSTMEQHHFSQTVSILQLEGHNIFSTLSSSEYEQVLEIIRKAIIATDLALYFGNRKQLEEMYQTGSLNLNNQSHRDRVIGLMMTACDLCSVTKLWPVTKLTANDIYAEFWAEGDEMKKLGIQPIPMMDRDKKDEVPQGQLGFYNAVAIPCYTTLTQILPPTEPLLKACRDNLSQWEKVIRGEETATWISSPSVAQKAAASED.

Disordered regions lie at residues 1–90 (MASL…RGGG), 151–193 (AAAA…GRRR), and 205–250 (LPAR…RPQG). Composition is skewed to gly residues over residues 79-90 (GGPGALSARGGG) and 154-168 (AGGGGDAGGGGGGGQ). The segment covering 220–231 (PLGQAARRAGSP) has biased composition (low complexity). Over residues 232-243 (GFPGAGPGGGGQ) the composition is skewed to gly residues. The residue at position 282 (Thr282) is a Phosphothreonine. GAF domains are found at residues 367–510 (DNQL…SVAI) and 542–688 (AIDS…ALAL). 3',5'-cyclic AMP-binding positions include 562 to 563 (RC), 606 to 607 (IA), Thr640, Gln659, and His791. Residues 718–1035 (TSEEWQGLMQ…SQWEKVIRGE (318 aa)) form the PDEase domain. Residue His791 is the Proton donor of the active site. His791 contributes to the 3',5'-cyclic GMP binding site. Residues His795, His829, Asp830, and Asp940 each coordinate a divalent metal cation. Position 992 (Gln992) interacts with 3',5'-cyclic AMP. Residue Gln992 coordinates 3',5'-cyclic GMP.

This sequence belongs to the cyclic nucleotide phosphodiesterase family. In terms of assembly, homodimer. A divalent metal cation is required as a cofactor. Post-translationally, phosphorylated on Thr-16. As to expression, abundant in the putamen and caudate nucleus regions of brain and testis, moderately expressed in the thyroid gland, pituitary gland, thalamus and cerebellum.

It localises to the cytoplasm. It is found in the cytosol. It catalyses the reaction a nucleoside 3',5'-cyclic phosphate + H2O = a nucleoside 5'-phosphate + H(+). The catalysed reaction is 3',5'-cyclic AMP + H2O = AMP + H(+). It carries out the reaction 3',5'-cyclic GMP + H2O = GMP + H(+). It functions in the pathway purine metabolism; 3',5'-cyclic AMP degradation; AMP from 3',5'-cyclic AMP: step 1/1. It participates in purine metabolism; 3',5'-cyclic GMP degradation; GMP from 3',5'-cyclic GMP: step 1/1. Its activity is regulated as follows. Inhibited by dipyridamole and moderately by IBMX. cGMP acts as an allosteric activator. In terms of biological role, plays a role in signal transduction by regulating the intracellular concentration of cyclic nucleotides. Can hydrolyze both cAMP and cGMP, but has higher affinity for cAMP and is more efficient with cAMP as substrate. May play a critical role in regulating cAMP and cGMP levels in the striatum, a region of the brain that contributes to the control of movement and cognition. The polypeptide is cAMP and cAMP-inhibited cGMP 3',5'-cyclic phosphodiesterase 10A (PDE10A) (Homo sapiens (Human)).